Here is a 224-residue protein sequence, read N- to C-terminus: Transcription factor HEC3 (224 aa).

2 disordered regions span residues 22–42 (SSNNNNKNDDHHHQHNNDPIG) and 68–88 (SLTTTTLLSGDQEDDEDEEEP). Over residues 28-37 (KNDDHHHQHN) the composition is skewed to basic and acidic residues. The span at 68 to 77 (SLTTTTLLSG) shows a compositional bias: low complexity. The segment covering 78–88 (DQEDDEDEEEP) has biased composition (acidic residues). Positions 125 to 174 (ISDDPQSVAARHRRERISERIRILQRLVPGGTKMDTASMLDEAIRYVKFL) constitute a bHLH domain. Residues 183–224 (NNTGYTPPPPQDQASQAVTTSWVSPPPPPSFGRGGRGVGELI) form a disordered region. Positions 194–204 (DQASQAVTTSW) are enriched in polar residues. Residues 214–224 (GRGGRGVGELI) show a composition bias toward gly residues.

Homodimer. Interacts with SPT. In terms of tissue distribution, gynoecium.

The protein resides in the nucleus. In terms of biological role, required for the female reproductive tract development and fertility. This chain is Transcription factor HEC3 (HEC3), found in Arabidopsis thaliana (Mouse-ear cress).